The following is a 172-amino-acid chain: Large ribosomal subunit protein uL10 (172 aa).

It belongs to the universal ribosomal protein uL10 family. As to quaternary structure, part of the ribosomal stalk of the 50S ribosomal subunit. The N-terminus interacts with L11 and the large rRNA to form the base of the stalk. The C-terminus forms an elongated spine to which L12 dimers bind in a sequential fashion forming a multimeric L10(L12)X complex.

Forms part of the ribosomal stalk, playing a central role in the interaction of the ribosome with GTP-bound translation factors. This Chlorobium chlorochromatii (strain CaD3) protein is Large ribosomal subunit protein uL10.